The sequence spans 153 residues: Actin-related protein 2/3 complex subunit 5-like protein (153 aa).

Serine 64 is subject to Phosphoserine.

The protein belongs to the ARPC5 family. May be a component of the Arp2/3 complex in which it may replace ARPC5.

It localises to the cytoplasm. The protein localises to the cytoskeleton. May function as component of the Arp2/3 complex which is involved in regulation of actin polymerization and together with an activating nucleation-promoting factor (NPF) mediates the formation of branched actin networks. This chain is Actin-related protein 2/3 complex subunit 5-like protein (ARPC5L), found in Pongo abelii (Sumatran orangutan).